We begin with the raw amino-acid sequence, 288 residues long: Probable endonuclease 4 (288 aa).

Zn(2+) contacts are provided by H75, H115, E153, D187, H190, H224, D237, H239, and E269.

The protein belongs to the AP endonuclease 2 family. The cofactor is Zn(2+).

The enzyme catalyses Endonucleolytic cleavage to 5'-phosphooligonucleotide end-products.. Endonuclease IV plays a role in DNA repair. It cleaves phosphodiester bonds at apurinic or apyrimidinic (AP) sites, generating a 3'-hydroxyl group and a 5'-terminal sugar phosphate. The sequence is that of Probable endonuclease 4 from Chlamydia trachomatis serovar L2 (strain ATCC VR-902B / DSM 19102 / 434/Bu).